The primary structure comprises 367 residues: Glutamate 5-kinase (367 aa).

Lys10 contributes to the ATP binding site. Ser50, Asp137, and Asn149 together coordinate substrate. Residues 169–170 and 211–217 contribute to the ATP site; these read TD and TGGMSTK. The region spanning 275–353 is the PUA domain; it reads AGEITVDEGA…QEIDAILGYE (79 aa).

The protein belongs to the glutamate 5-kinase family.

It is found in the cytoplasm. It catalyses the reaction L-glutamate + ATP = L-glutamyl 5-phosphate + ADP. It participates in amino-acid biosynthesis; L-proline biosynthesis; L-glutamate 5-semialdehyde from L-glutamate: step 1/2. Its function is as follows. Catalyzes the transfer of a phosphate group to glutamate to form L-glutamate 5-phosphate. The chain is Glutamate 5-kinase from Escherichia fergusonii (strain ATCC 35469 / DSM 13698 / CCUG 18766 / IAM 14443 / JCM 21226 / LMG 7866 / NBRC 102419 / NCTC 12128 / CDC 0568-73).